A 95-amino-acid polypeptide reads, in one-letter code: Toxin HigB-1 (95 aa).

Its function is as follows. Toxic component of a type II toxin-antitoxin (TA) system. Inhibits translation by cleavage of mRNA. This Vibrio cholerae serotype O1 (strain ATCC 39315 / El Tor Inaba N16961) protein is Toxin HigB-1 (higB-1).